A 34-amino-acid polypeptide reads, in one-letter code: Potassium channel toxin alpha-KTx 6.3 (34 aa).

Disulfide bonds link cysteine 3–cysteine 24, cysteine 9–cysteine 29, cysteine 13–cysteine 31, and cysteine 19–cysteine 34. At cysteine 34 the chain carries Cysteine amide.

Belongs to the short scorpion toxin superfamily. Potassium channel inhibitor family. Alpha-KTx 06 subfamily. In terms of processing, amidated. The amidated toxin shows 5-fold more affinity for Kv1.3/KCNA3 than the synthetic carboxylated form. Expressed by the venom gland.

It is found in the secreted. Its function is as follows. Potently blocks voltage-gated potassium channels Kv1.1/KCNA1 (IC(50)=7-11 nM) and Kv1.3/KCNA3 (IC(50)=11-29 pM). Also mildly blocks intermediate (IK) conductance calcium-activated potassium channels (KCa3.1/KCNN4) and ERG1/Kv11.1/KCNH2. Shows ability to suppress proliferation of lymphocytes, which are known to be sensitive to Kv1.3/KCNA3 homotetrameric channel block. This is Potassium channel toxin alpha-KTx 6.3 from Heterometrus spinifer (Asia giant forest scorpion).